The following is a 92-amino-acid chain: Co-chaperonin GroES (92 aa).

This sequence belongs to the GroES chaperonin family. In terms of assembly, heptamer of 7 subunits arranged in a ring. Interacts with the chaperonin GroEL.

It localises to the cytoplasm. Functionally, together with the chaperonin GroEL, plays an essential role in assisting protein folding. The GroEL-GroES system forms a nano-cage that allows encapsulation of the non-native substrate proteins and provides a physical environment optimized to promote and accelerate protein folding. GroES binds to the apical surface of the GroEL ring, thereby capping the opening of the GroEL channel. This Thermotoga petrophila (strain ATCC BAA-488 / DSM 13995 / JCM 10881 / RKU-1) protein is Co-chaperonin GroES.